Consider the following 130-residue polypeptide: DNA-directed RNA polymerase subunit omega (130 aa).

Residues 108 to 130 (TEEELLKGLEGLAPPEEQPEEDE) form a disordered region.

The protein belongs to the RNA polymerase subunit omega family. As to quaternary structure, the RNAP catalytic core consists of 2 alpha, 1 beta, 1 beta' and 1 omega subunit. When a sigma factor is associated with the core the holoenzyme is formed, which can initiate transcription.

It carries out the reaction RNA(n) + a ribonucleoside 5'-triphosphate = RNA(n+1) + diphosphate. In terms of biological role, promotes RNA polymerase assembly. Latches the N- and C-terminal regions of the beta' subunit thereby facilitating its interaction with the beta and alpha subunits. This is DNA-directed RNA polymerase subunit omega from Rhodopseudomonas palustris (strain ATCC BAA-98 / CGA009).